The primary structure comprises 175 residues: MKLILIKPVKKLGKIMDIVDVANGFGRNYLLPRNYAIRATNANLEIVKSTVQQLNEKNQKGIAAAQAVMQKIDRSFITFICQTSDDGKLFGSITAKEIIKKLQISSDIKAYIDIKPIKTAGIHEVEVSLHAEVHCKIFINVARSNTEAQEYLKKFNTSLQDTNNNVLVEKNSSIS.

This sequence belongs to the bacterial ribosomal protein bL9 family.

In terms of biological role, binds to the 23S rRNA. The polypeptide is Large ribosomal subunit protein bL9 (Orientia tsutsugamushi (strain Boryong) (Rickettsia tsutsugamushi)).